The sequence spans 428 residues: Peptidase B (428 aa).

2 residues coordinate Mn(2+): Lys195 and Asp200. The active site involves Lys207. Mn(2+) contacts are provided by Asp218, Asp277, and Glu279. Arg281 is an active-site residue.

It belongs to the peptidase M17 family. In terms of assembly, homohexamer. Requires Mn(2+) as cofactor.

It localises to the cytoplasm. The enzyme catalyses Release of an N-terminal amino acid, Xaa, from a peptide or arylamide. Xaa is preferably Glu or Asp but may be other amino acids, including Leu, Met, His, Cys and Gln.. Probably plays an important role in intracellular peptide degradation. In Klebsiella pneumoniae subsp. pneumoniae (strain ATCC 700721 / MGH 78578), this protein is Peptidase B.